The sequence spans 590 residues: Cytosolic Fe-S cluster assembly factor nar1 (590 aa).

[4Fe-4S] cluster-binding residues include C20, C62, C65, C68, C214, C269, C456, and C460.

It belongs to the NARF family.

Functionally, component of the cytosolic Fe/S protein assembly machinery. Required for maturation of extramitochondrial Fe/S proteins. May play a role in the transfer of pre-assembled Fe/S clusters to target apoproteins. The polypeptide is Cytosolic Fe-S cluster assembly factor nar1 (nar1) (Talaromyces marneffei (strain ATCC 18224 / CBS 334.59 / QM 7333) (Penicillium marneffei)).